Here is a 107-residue protein sequence, read N- to C-terminus: Ig kappa chain V-VI region XRPC 44 (107 aa).

A framework-1 region spans residues 1–23 (EIVLTQSPAITAASLGQKVTITC). A disulfide bridge connects residues Cys23 and Cys87. Residues 24–33 (SASSSVSYMH) are complementarity-determining-1. The tract at residues 34–48 (WYQQKSGTSPKPWIY) is framework-2. The complementarity-determining-2 stretch occupies residues 49 to 55 (EISKLAS). The interval 56 to 87 (GVPARFSGSGSGTSYSLTISSMEAEDAAIYYC) is framework-3. Residues 88 to 96 (QQWNYPLWT) form a complementarity-determining-3 region. The tract at residues 97–106 (FGGGTKLEIK) is framework-4.

The polypeptide is Ig kappa chain V-VI region XRPC 44 (Mus musculus (Mouse)).